The chain runs to 79 residues: Small ribosomal subunit protein eS17 (79 aa).

It belongs to the eukaryotic ribosomal protein eS17 family.

This chain is Small ribosomal subunit protein eS17, found in Saccharolobus islandicus (strain Y.N.15.51 / Yellowstone #2) (Sulfolobus islandicus).